The following is a 211-amino-acid chain: MDGLRQRVEHFLEQRNLVTEVLGALEAKTGVEKRYLAAGAVTLLSLYLLFGYGASLLCNLIGFVYPAYASIKAIESPSKDDDTVWLTYWVVYALFGLAEFFSDLLLSWFPFYYVGKCAFLLFCMAPRPWNGALMLYQRVVRPLFLRHHGAVDRIMNDLSGRALDAAAGITRNVLQVLARSRAGITPVAVAGPSTPLEADLKPSQTPQPKDK.

Transmembrane regions (helical) follow at residues 44-64 and 89-109; these read LSLYLLFGYGASLLCNLIGFV and WVVYALFGLAEFFSDLLLSWF. Positions 190-211 are disordered; it reads AGPSTPLEADLKPSQTPQPKDK. The segment covering 202–211 has biased composition (polar residues); sequence PSQTPQPKDK.

The protein belongs to the DP1 family. In terms of assembly, interacts with STX3. Interacts with clathrin. In terms of tissue distribution, expressed in circumvallate papillae and testis. Expressed in the retina. Isoform 1 is predominantly present in mature optic cups. Isoform 1 expression is confined to the cell body and inner segment of developing rod photoreceptor cells.

The protein resides in the endoplasmic reticulum membrane. It is found in the cytoplasmic vesicle. The protein localises to the clathrin-coated vesicle membrane. Functionally, required for correct function and survival of retinal photoreceptors. Required for retinal development. In rod photoreceptors, facilitates stability and/or trafficking of guanylate cyclases and is required to maintain endoplasmic reticulum and mitochondrial homeostasis. May play a role in clathrin-coated intracellular vesicle trafficking of proteins from the endoplasmic reticulum to the retinal rod plasma membrane. The sequence is that of Receptor expression-enhancing protein 6 (REEP6) from Homo sapiens (Human).